A 422-amino-acid polypeptide reads, in one-letter code: Zinc finger protein Gfi-1 (422 aa).

The SNAG domain stretch occupies residues 1 to 20 (MPRSFLVKSKKAHSYHQPRS). The interval 1 to 109 (MPRSFLVKSK…ASEKSMCPSL (109 aa)) is disordered. A phosphoserine mark is found at Ser20 and Ser56. Residues 140-257 (RPCGALERGA…LLLGGGSYKC (118 aa)) form a required for interaction with RELA region. C2H2-type zinc fingers lie at residues 255-278 (YKCI…RRSH), 284-306 (FACE…KAVH), 312-334 (FDCK…LLIH), 340-362 (YPCQ…TFIH), 368-390 (HKCQ…SRKH), and 396-419 (FGCD…ETQH).

Interacts with U2AF1L4. Component of RCOR-GFI-KDM1A-HDAC complexes. Interacts directly with RCOR1, KDM1A and HDAC2. Also interacts with HDAC1. Interacts (via the zinc-finger domain) with ARIH2; the interaction prevents GFI1 ubiquitination and proteasomal degradation. Interacts with PIAS3; the interaction relieves the inhibitory effect of PIAS3 on STAT3-mediated transcriptional activity. Forms a complex with EHMT2 and HDAC1 to promote 'Lys-9' dimethylation of H3 (H3K9Me2) and repress expression of target genes. Interacts directly with EHMT2. Component of the GFI1-AJUBA-HDAC1 repressor complex. Interacts directly with AJUBA (via ITS LIM domains); the interaction results in the HDAC-dependent corepression of a subset of GFI1 target genes and, occurs independently of the SNAG domain. Interacts with SPI1; the interaction inhibits SPI1 transcriptional activity targeted at macrophage-specific genes, repressing macrophage differentiation of myeloid progenitor cells and promoting granulocyte commitment. Interacts with RUNX1T1; the interaction represses HDAC-mediated transcriptional activity. Interacts with RELA; the interaction occurs on liposaccharide (LPS) stimulation and controls RELA DNA binding activity and regulates endotoxin-mediated TOLL-like receptor inflammatory response. Interacts (via the C-terminal zinc fingers) with ZBTB17; the interaction results in the recruitment of GFI1 to the CDKN1A/p21 and CDKN1B promoters and repression of transcription. Ubiquitinated. Ubiquitination and degradation by the proteasome is inhibited by the ubiquitin ligase, ARIH2.

It localises to the nucleus. Functionally, transcription repressor essential for hematopoiesis. Functions in a cell-context and development-specific manner. Binds to 5'-TAAATCAC[AT]GCA-3' in the promoter region of a large number of genes. Component of several complexes, including the EHMT2-GFI1-HDAC1, AJUBA-GFI1-HDAC1 and RCOR-GFI-KDM1A-HDAC complexes, that suppress, via histone deacetylase (HDAC) recruitment, a number of genes implicated in multilineage blood cell development. Regulates neutrophil differentiation, promotes proliferation of lymphoid cells, and is required for granulocyte development. Inhibits SPI1 transcriptional activity at macrophage-specific genes, repressing macrophage differentiation of myeloid progenitor cells and promoting granulocyte commitment. Mediates, together with U2AF1L4, the alternative splicing of CD45 and controls T-cell receptor signaling. Regulates the endotoxin-mediated Toll-like receptor (TLR) inflammatory response by antagonizing RELA. Cooperates with CBFA2T2 to regulate ITGB1-dependent neurite growth. Controls cell-cycle progression by repressing CDKNIA/p21 transcription in response to TGFB1 via recruitment of GFI1 by ZBTB17 to the CDKNIA/p21 and CDKNIB promoters. Required for the maintenance of inner ear hair cells. In addition to its role in transcription, acts as a substrate adapter for PRMT1 in the DNA damage response: facilitates the recognition of TP53BP1 and MRE11 substrates by PRMT1, promoting their methylation and the DNA damage response. The protein is Zinc finger protein Gfi-1 (GFI1) of Homo sapiens (Human).